The chain runs to 185 residues: Transposon Tn3 resolvase (185 aa).

The Resolvase/invertase-type recombinase catalytic domain occupies 2-137 (RIFGYARVST…EGRQEAKLKG (136 aa)). Ser-10 acts as the O-(5'-phospho-DNA)-serine intermediate in catalysis. The segment at residues 161 to 180 (ATEIAHQLSIARSTVYKILE) is a DNA-binding region (H-T-H motif).

It belongs to the site-specific recombinase resolvase family.

Resolvase catalyzes the resolution (a site-specific recombination) of the cointegrated replicon to yield the final transposition products. This is Transposon Tn3 resolvase (tnpR) from Escherichia coli.